Here is a 208-residue protein sequence, read N- to C-terminus: Thymidylate kinase (208 aa).

10-17 is a binding site for ATP; sequence GIDGSGKT.

It belongs to the thymidylate kinase family.

It carries out the reaction dTMP + ATP = dTDP + ADP. Phosphorylation of dTMP to form dTDP in both de novo and salvage pathways of dTTP synthesis. This chain is Thymidylate kinase, found in Ligilactobacillus salivarius (strain UCC118) (Lactobacillus salivarius).